Reading from the N-terminus, the 736-residue chain is 3',5'-cyclic-AMP phosphodiesterase 4B (736 aa).

Disordered stretches follow at residues 51-78 (QLPP…TTLP), 189-209 (LHGT…SRVN), and 282-301 (KQND…KKKK). S290 carries the post-translational modification Phosphoserine. In terms of domain architecture, PDEase spans 330–659 (VNTENEDHLA…NWYQSMIPQS (330 aa)). H406 acts as the Proton donor in catalysis. H406 is a 3',5'-cyclic AMP binding site. Positions 406 and 410 each coordinate AMP. Zn(2+)-binding residues include H410, H446, D447, and D564. Positions 447, 564, 615, and 618 each coordinate AMP. D447 is a Mg(2+) binding site. D447 is a binding site for Mn(2+). Positions 615 and 618 each coordinate 3',5'-cyclic AMP. Phosphoserine occurs at positions 659 and 661. The interval 685–736 (DEEDSEGPEKEGEGHSYFSSTKTLCVIDPENRDSLGETDIDIATEDKSPVDT) is disordered.

The protein belongs to the cyclic nucleotide phosphodiesterase family. PDE4 subfamily. As to quaternary structure, interacts with DISC1. The cofactor is Zn(2+). Mg(2+) serves as cofactor. It depends on Mn(2+) as a cofactor. As to expression, expressed in brain, heart, lung and skeletal muscle. Expressed in white blood cells. Brain-specific isoform.

It localises to the cytoplasm. The protein localises to the cell membrane. The enzyme catalyses 3',5'-cyclic AMP + H2O = AMP + H(+). The protein operates within purine metabolism; 3',5'-cyclic AMP degradation; AMP from 3',5'-cyclic AMP: step 1/1. Inhibited by rolipram. Functionally, hydrolyzes the second messenger cAMP, which is a key regulator of many important physiological processes. May be involved in mediating central nervous system effects of therapeutic agents ranging from antidepressants to antiasthmatic and anti-inflammatory agents. The sequence is that of 3',5'-cyclic-AMP phosphodiesterase 4B from Homo sapiens (Human).